The following is a 494-amino-acid chain: Cobyrinate a,c-diamide synthase (494 aa).

One can recognise a GATase cobBQ-type domain in the interval 270 to 475 (KIGVALDEAF…AHLHGVAYRE (206 aa)). The active-site Nucleophile is the Cys352.

This sequence belongs to the CobB/CbiA family. Mg(2+) serves as cofactor.

The enzyme catalyses cob(II)yrinate + 2 L-glutamine + 2 ATP + 2 H2O = cob(II)yrinate a,c diamide + 2 L-glutamate + 2 ADP + 2 phosphate + 2 H(+). It carries out the reaction Ni-sirohydrochlorin + 2 L-glutamine + 2 ATP + 2 H2O = Ni-sirohydrochlorin a,c-diamide + 2 L-glutamate + 2 ADP + 2 phosphate + 2 H(+). It participates in cofactor biosynthesis; adenosylcobalamin biosynthesis; cob(II)yrinate a,c-diamide from sirohydrochlorin (anaerobic route): step 10/10. Functionally, catalyzes the ATP-dependent amidation of the two carboxylate groups at positions a and c of cobyrinate, using either L-glutamine or ammonia as the nitrogen source (Potential). Involved in the biosynthesis of the unique nickel-containing tetrapyrrole coenzyme F430, the prosthetic group of methyl-coenzyme M reductase (MCR), which plays a key role in methanogenesis and anaerobic methane oxidation. Catalyzes the ATP-dependent amidation of the two carboxylate groups at positions a and c of Ni-sirohydrochlorin, using L-glutamine or ammonia as the nitrogen source. Also able to use sirohydrochlorin as substrate, but only produces a monoamide species in a much slower reaction. Unable to use other metallosirohydrochlorins such as sirohaem and Co-sirohydrochlorin. In Methanosarcina barkeri (strain Fusaro / DSM 804), this protein is Cobyrinate a,c-diamide synthase.